The following is a 624-amino-acid chain: Diatom spindle kinesin-1 (624 aa).

The tract at residues M1–N59 is disordered. The globular stretch occupies residues M1–P85. Basic and acidic residues-rich tracts occupy residues G17–R33 and Q42–N54. Residues N95–Q411 enclose the Kinesin motor domain. G186–T193 serves as a coordination point for ATP. Residues S426–Y624 are a coiled coil. The segment covering V478–V511 has biased composition (acidic residues). The disordered stretch occupies residues V478–L528.

This sequence belongs to the TRAFAC class myosin-kinesin ATPase superfamily. Kinesin family. MCAK/KIF2 subfamily.

Its subcellular location is the cytoplasm. The protein resides in the cytoskeleton. Involved in anaphase spindle elongation. In Cylindrotheca fusiformis (Marine diatom), this protein is Diatom spindle kinesin-1 (DSK1).